The following is a 370-amino-acid chain: Phospho-N-acetylmuramoyl-pentapeptide-transferase (370 aa).

Transmembrane regions (helical) follow at residues 24 to 44 (YLTF…VAMG), 78 to 98 (TMGG…WADL), 103 to 123 (VWVV…DDYA), 138 to 158 (KLVA…LFAP), 177 to 197 (ALVI…IAGF), 209 to 229 (GLAI…AYLV), 245 to 265 (GVGE…GFLW), 273 to 293 (IFMG…IAVC), 298 to 318 (LVLG…MIQV), and 347 to 367 (TVVI…LATL).

The protein belongs to the glycosyltransferase 4 family. MraY subfamily. Mg(2+) is required as a cofactor.

The protein resides in the cell inner membrane. The enzyme catalyses UDP-N-acetyl-alpha-D-muramoyl-L-alanyl-gamma-D-glutamyl-meso-2,6-diaminopimeloyl-D-alanyl-D-alanine + di-trans,octa-cis-undecaprenyl phosphate = di-trans,octa-cis-undecaprenyl diphospho-N-acetyl-alpha-D-muramoyl-L-alanyl-D-glutamyl-meso-2,6-diaminopimeloyl-D-alanyl-D-alanine + UMP. The protein operates within cell wall biogenesis; peptidoglycan biosynthesis. Its function is as follows. Catalyzes the initial step of the lipid cycle reactions in the biosynthesis of the cell wall peptidoglycan: transfers peptidoglycan precursor phospho-MurNAc-pentapeptide from UDP-MurNAc-pentapeptide onto the lipid carrier undecaprenyl phosphate, yielding undecaprenyl-pyrophosphoryl-MurNAc-pentapeptide, known as lipid I. In Caulobacter vibrioides (strain NA1000 / CB15N) (Caulobacter crescentus), this protein is Phospho-N-acetylmuramoyl-pentapeptide-transferase.